The following is an 86-amino-acid chain: Large ribosomal subunit protein bL31B (86 aa).

Belongs to the bacterial ribosomal protein bL31 family. Type B subfamily. Part of the 50S ribosomal subunit.

The polypeptide is Large ribosomal subunit protein bL31B (Streptococcus equi subsp. equi (strain 4047)).